Here is a 714-residue protein sequence, read N- to C-terminus: Fatty acid oxidation complex subunit alpha (714 aa).

The enoyl-CoA hydratase stretch occupies residues 1-190 (MEMTSAFTLN…KLGLVDDVVP (190 aa)). Residues 306–714 (APLNSVGILG…FWKTTATDLQ (409 aa)) are 3-hydroxyacyl-CoA dehydrogenase.

In the N-terminal section; belongs to the enoyl-CoA hydratase/isomerase family. The protein in the central section; belongs to the 3-hydroxyacyl-CoA dehydrogenase family. As to quaternary structure, heterotetramer of two alpha chains (FadJ) and two beta chains (FadI).

Its subcellular location is the cytoplasm. It carries out the reaction a (3S)-3-hydroxyacyl-CoA = a (2E)-enoyl-CoA + H2O. The catalysed reaction is a 4-saturated-(3S)-3-hydroxyacyl-CoA = a (3E)-enoyl-CoA + H2O. The enzyme catalyses a (3S)-3-hydroxyacyl-CoA + NAD(+) = a 3-oxoacyl-CoA + NADH + H(+). It catalyses the reaction (3S)-3-hydroxybutanoyl-CoA = (3R)-3-hydroxybutanoyl-CoA. The protein operates within lipid metabolism; fatty acid beta-oxidation. Functionally, catalyzes the formation of a hydroxyacyl-CoA by addition of water on enoyl-CoA. Also exhibits 3-hydroxyacyl-CoA epimerase and 3-hydroxyacyl-CoA dehydrogenase activities. Strongly involved in the anaerobic degradation of long and medium-chain fatty acids in the presence of nitrate and weakly involved in the aerobic degradation of long-chain fatty acids. This chain is Fatty acid oxidation complex subunit alpha (fadJ), found in Escherichia coli (strain K12).